A 349-amino-acid polypeptide reads, in one-letter code: Variable large protein 19 (349 aa).

An N-terminal signal peptide occupies residues 1-18; it reads MRKRISAIIMTLFMVLVS. Residue cysteine 19 is the site of N-palmitoyl cysteine attachment. A lipid anchor (S-diacylglycerol cysteine) is attached at cysteine 19.

Belongs to the variable large protein (Vlp) family. Gamma subfamily.

It is found in the cell outer membrane. Functionally, the Vlp and Vsp proteins are antigenically distinct proteins, only one vlp or vsp gene is transcriptionally active at any one time. Switching between these genes is a mechanism of host immune response evasion. The polypeptide is Variable large protein 19 (Borrelia hermsii).